The primary structure comprises 470 residues: Dihydrolipoyl dehydrogenase (470 aa).

Residues 39 to 47, K56, and A119 each bind FAD; that span reads EKATLGGVC. A disulfide bridge connects residues C47 and C52. NAD(+)-binding positions include 183-187, E206, and 272-275; these read GGGYI and TVGR. Positions 315 and 323 each coordinate FAD. Residue H447 is the Proton acceptor of the active site.

The protein belongs to the class-I pyridine nucleotide-disulfide oxidoreductase family. As to quaternary structure, homodimer. Component of two multienzyme complexes: pyruvate dehydrogenase complex and oxoglutarate dehydrogenase complex. It depends on FAD as a cofactor.

It localises to the cytoplasm. It carries out the reaction N(6)-[(R)-dihydrolipoyl]-L-lysyl-[protein] + NAD(+) = N(6)-[(R)-lipoyl]-L-lysyl-[protein] + NADH + H(+). Functionally, catalyzes the oxidation of dihydrolipoamide to lipoamide. This chain is Dihydrolipoyl dehydrogenase (pdhD), found in Bacillus subtilis (strain 168).